The following is a 492-amino-acid chain: E3 ubiquitin-protein ligase ARIH2 (492 aa).

Positions 1–11 are enriched in polar residues; sequence MSVDMNSQGSD. A disordered region spans residues 1 to 37; the sequence is MSVDMNSQGSDSNEEDYDPNCEEEEEEEEDPGDIEDY. Residues 12 to 36 are compositionally biased toward acidic residues; sequence SNEEDYDPNCEEEEEEEEDPGDIED. The tract at residues 64–111 is UBA-like; sequence TYKESEGALHEHMTSLASVLKVSHSVAKLILVNFHWQVSEILDRYRSN. Residues 134 to 343 form a TRIAD supradomain region; that stretch reads PPHHCAVCMQ…SEYYECSRYK (210 aa). Residues cysteine 138, cysteine 141, cysteine 155, histidine 157, cysteine 160, cysteine 163, cysteine 182, cysteine 187, cysteine 227, cysteine 232, cysteine 248, cysteine 251, cysteine 256, cysteine 259, histidine 264, cysteine 269, cysteine 296, and cysteine 299 each contribute to the Zn(2+) site. The RING-type 1 zinc-finger motif lies at 138–187; that stretch reads CAVCMQFVRKENLLSLACQHQFCRSCWEQHCSVLVKDGVGVGISCMAQDC. The segment at 207–269 adopts an IBR-type zinc-finger fold; it reads DKYRRYLFRD…RQMYHAPTDC (63 aa). Residues 296-325 form an RING-type 2; atypical zinc finger; it reads CPKCNICIEKNGGCNHMQCSKCKHDFCWMC. Cysteine 309 is an active-site residue. 6 residues coordinate Zn(2+): cysteine 314, cysteine 317, cysteine 322, cysteine 325, histidine 332, and cysteine 339. Serine 352 carries the phosphoserine modification. An ariadne domain region spans residues 358 to 492; the sequence is REALKKYLFY…RTLLKDFHDT (135 aa).

It belongs to the RBR family. Ariadne subfamily. As to quaternary structure, interacts (via RING-type zinc finger 1) with UBE2L3. Interacts (via RING-type zinc finger 2) with UBE2N. Interacts with neddylated CUL5. Interacts (via RING-type 2) with GFI1B. Interacts with GFI1; prevents its ubiquitination and proteasomal degradation. Interacts with DCUN1D1 (via UBA-like domain); promotes DCUN1D1 ubiquitination. Ubiquitinated. Ubiquitination promotes proteasomal degradation.

Its subcellular location is the nucleus. The protein resides in the cytoplasm. It carries out the reaction [E2 ubiquitin-conjugating enzyme]-S-ubiquitinyl-L-cysteine + [acceptor protein]-L-lysine = [E2 ubiquitin-conjugating enzyme]-L-cysteine + [acceptor protein]-N(6)-ubiquitinyl-L-lysine.. Its pathway is protein modification; protein ubiquitination. Its activity is regulated as follows. Autoinhibited by the ariadne domain, which masks the second RING-type zinc finger that contains the active site and inhibits the E3 activity. Inhibition is relieved upon binding to neddylated cullin-RING ubiquitin ligase complexes, which activate the E3 ligase activity of ARIH1. Functionally, E3 ubiquitin-protein ligase, which catalyzes ubiquitination of target proteins together with ubiquitin-conjugating enzyme E2 UBE2L3. Acts as an atypical E3 ubiquitin-protein ligase by working together with cullin-5-RING ubiquitin ligase complex (ECS complex, also named CRL5 complex) and initiating ubiquitination of ECS substrates: associates with ECS complex and specifically mediates addition of the first ubiquitin on ECS targets. The initial ubiquitin is then elongated. E3 ubiquitin-protein ligase activity is activated upon binding to neddylated form of the ECS complex. Mediates 'Lys-6', 'Lys-48'- and 'Lys-63'-linked polyubiquitination. May play a role in myelopoiesis. The sequence is that of E3 ubiquitin-protein ligase ARIH2 (Arih2) from Mus musculus (Mouse).